The primary structure comprises 53 residues: Large ribosomal subunit protein bL33 (53 aa).

Belongs to the bacterial ribosomal protein bL33 family.

The sequence is that of Large ribosomal subunit protein bL33 from Blochmanniella floridana.